The sequence spans 262 residues: MSFLELTEVWGKPQKDIFFPSGSEVEESTDAPIQRTVQPIVTGSSVLALKFADGVMIAADNLASYGSLARFYDVERLTKVGDNTIVGAGGDISDYQQIQRLLEKLEIKEGNYGDGYALQPSYIHEYLSKVLYARRNKLDPYWNQLIVAGVDGENKEPYVAFADLRGTTYSAPAIATGFAMHLALPMLRKATDDDRWKTLSKESARATIDECMRVLFYRDARSLNKFSVATITPEGIEFQTDQSVSSKWAFAEKQYGYGTQTV.

It belongs to the peptidase T1B family. The 26S proteasome consists of a 20S proteasome core and two 19S regulatory subunits. The 20S proteasome core is composed of 28 subunits that are arranged in four stacked rings, resulting in a barrel-shaped structure. The two end rings are each formed by seven alpha subunits, and the two central rings are each formed by seven beta subunits. The catalytic chamber with the active sites is on the inside of the barrel.

The protein resides in the cytoplasm. The protein localises to the nucleus. In terms of biological role, non-catalytic component of the proteasome, a multicatalytic proteinase complex which is characterized by its ability to cleave peptides with Arg, Phe, Tyr, Leu, and Glu adjacent to the leaving group at neutral or slightly basic pH. The proteasome has an ATP-dependent proteolytic activity. The chain is Probable proteasome subunit beta type-7 from Schizosaccharomyces pombe (strain 972 / ATCC 24843) (Fission yeast).